Here is a 176-residue protein sequence, read N- to C-terminus: Ribosome maturation factor RimM (176 aa).

The 78-residue stretch at 99 to 176 (EDEYYWSDLV…RMVVDWERDF (78 aa)) folds into the PRC barrel domain.

The protein belongs to the RimM family. As to quaternary structure, binds ribosomal protein uS19.

The protein resides in the cytoplasm. Its function is as follows. An accessory protein needed during the final step in the assembly of 30S ribosomal subunit, possibly for assembly of the head region. Essential for efficient processing of 16S rRNA. May be needed both before and after RbfA during the maturation of 16S rRNA. It has affinity for free ribosomal 30S subunits but not for 70S ribosomes. The polypeptide is Ribosome maturation factor RimM (Psychrobacter sp. (strain PRwf-1)).